Here is a 334-residue protein sequence, read N- to C-terminus: Putative ankyrin repeat protein RBE_0347 (334 aa).

4 ANK repeats span residues 80–90 (EQGINPNIQDS), 91–120 (SGNT…NPNI), 124–161 (SDNT…LKDF), and 162–191 (VGFT…DINV).

This chain is Putative ankyrin repeat protein RBE_0347, found in Rickettsia bellii (strain RML369-C).